We begin with the raw amino-acid sequence, 318 residues long: Aquaporin-1 (318 aa).

Over residues 1–16 (MVQFGSRANTNMTGLP) the composition is skewed to polar residues. The segment at 1–27 (MVQFGSRANTNMTGLPTEQAVEDRRVG) is disordered. Topologically, residues 1–36 (MVQFGSRANTNMTGLPTEQAVEDRRVGNPKRDRMRN) are cytoplasmic. A helical membrane pass occupies residues 37 to 57 (ALVIVLGEFCGTFMFLLLSFI). The Extracellular segment spans residues 58-77 (GAQTALVTNSPSDAGSPLLP). Residues 78–98 (FSLMYIAASFGTALAVNVWIF) traverse the membrane as a helical segment. The Cytoplasmic segment spans residues 99-108 (YRVSGGMFNP). Positions 107–109 (NPA) match the NPA 1 motif. The chain crosses the membrane as a helical span at residues 109–129 (AVTLGLVLVGAVTPIHALLII). Residues 130 to 165 (PTQLVAAITAAGITDALLPGKLLVTNALGNGTSVAQ) are Extracellular-facing. An N-linked (GlcNAc...) asparagine glycan is attached at N159. The helical transmembrane segment at 166–186 (GVFIEMFLTSQLVLTVYFLAV) threads the bilayer. Topologically, residues 187–193 (EKHRSTH) are cytoplasmic. A helical transmembrane segment spans residues 194-214 (LAPIGIGISVFIAHICATNWT). The Extracellular segment spans residues 215–236 (GTSINPARSFGPSVVAGFHGYD). The NPA 2 signature appears at 219-221 (NPA). Residues 237–257 (WIYYIGPFMGSLLAFGCYKIF) form a helical membrane-spanning segment. Residues 258–318 (KVLEYQTANP…NDSVIDDQMV (61 aa)) lie on the Cytoplasmic side of the membrane. Positions 268–318 (GQDDDNLDRSGHHHFFGHRKEPMPHTHTDNIEPKDHGVPQRNDSVIDDQMV) are disordered. The segment covering 285–305 (HRKEPMPHTHTDNIEPKDHGV) has biased composition (basic and acidic residues).

This sequence belongs to the MIP/aquaporin (TC 1.A.8) family.

The protein localises to the nucleus membrane. It carries out the reaction H2O(in) = H2O(out). In terms of biological role, probable water channel involved in responses to changes in environmental conditions and conidiation. Involved in responses to hyperosmotic conditions, oxidative stress and cell wall destabilization. Also required for proper transcriptional activation of genes involved in aurofusarin biosynthesis. Not involved in pathogenicity, but negatively regulates deoxynivalenol (DON) production. This chain is Aquaporin-1, found in Gibberella zeae (strain ATCC MYA-4620 / CBS 123657 / FGSC 9075 / NRRL 31084 / PH-1) (Wheat head blight fungus).